We begin with the raw amino-acid sequence, 948 residues long: Putative helicase 009L (948 aa).

Residues 64-243 (LSEDTPYREL…ADVLNLILPQ (180 aa)) enclose the Helicase ATP-binding domain. 77–84 (HAPGTGKT) contributes to the ATP binding site. The DEAH box motif lies at 187–190 (DEVH). The 184-residue stretch at 371–554 (VKYDYLVRVA…AVERILMTSA (184 aa)) folds into the Helicase C-terminal domain.

This is Putative helicase 009L from Frog virus 3 (isolate Goorha) (FV-3).